The chain runs to 607 residues: Fatty acid amide hydrolase (607 aa).

Catalysis depends on charge relay system residues K204 and S280. 301 to 304 (GGGS) provides a ligand contact to substrate. The active-site Acyl-ester intermediate is S304.

It belongs to the amidase family. In terms of assembly, forms homodimers.

It is found in the endoplasmic reticulum membrane. Its subcellular location is the cell membrane. It carries out the reaction N-(9Z,12Z-octadecadienoyl)-ethanolamine + H2O = ethanolamine + (9Z,12Z)-octadecadienoate. Functionally, catalyzes the hydrolysis of bioactive endogenous fatty acid amides to their corresponding acids. The hydrolysis of endogenous amidated lipids terminates their participation as lipid mediators in various signaling systems. Converts a wide range of N-acylethanolamines (NAEs) to their corresponding free fatty acids and ethanolamine. This is Fatty acid amide hydrolase from Medicago truncatula (Barrel medic).